The sequence spans 490 residues: Vacuolar amino acid transporter 7 (490 aa).

Residues 1–6 are Cytoplasmic-facing; it reads MEATSS. A helical membrane pass occupies residues 7–27; sequence ALSSTANLVKTIVGAGTLAIP. The Vacuolar segment spans residues 28–34; sequence YSFKSDG. A helical membrane pass occupies residues 35 to 55; it reads VLVGVILTLLAAVTSGLGLFV. Residues 56–84 lie on the Cytoplasmic side of the membrane; the sequence is LSKCSKTLINPRNSSFFTLCMLTYPTLAP. Residues 85-105 form a helical membrane-spanning segment; that stretch reads IFDLAMIVQCFGVGLSYLVLI. Residues 106–108 lie on the Vacuolar side of the membrane; it reads GDL. A helical membrane pass occupies residues 109 to 129; that stretch reads FPGLFGGERNYWIIASAVIII. The Cytoplasmic portion of the chain corresponds to 130–143; it reads PLCLVKKLDQLKYS. A helical membrane pass occupies residues 144–164; the sequence is SILGLFALAYISILVFSHFVF. At 165–190 the chain is on the vacuolar side; it reads ELGKGELTNILRNDICWWKIHDFKGL. A helical membrane pass occupies residues 191–211; it reads LSTFSIIIFAFTGSMNLFPMI. The Cytoplasmic segment spans residues 212-221; that stretch reads NELKDNSMEN. The helical transmembrane segment at 222-242 threads the bilayer; it reads ITFVINNSISLSTALFLIVGL. The Vacuolar segment spans residues 243-264; that stretch reads SGYLTFGNETLGNLMLNYDPNS. Residues 265–285 form a helical membrane-spanning segment; that stretch reads IWIVIGKFCLGSMLILSFPLL. At 286–397 the chain is on the cytoplasmic side; that stretch reads FHPLRIAVNN…FVKSRFYWIT (112 aa). A disordered region spans residues 355-374; that stretch reads NGNFDNGSIESQENNNDERG. Residues 357–368 are compositionally biased toward polar residues; sequence NFDNGSIESQEN. A helical membrane pass occupies residues 398 to 418; sequence ALLLISMYTLALSVQSFALVL. Residues 419–428 lie on the Vacuolar side of the membrane; sequence SFVGATGSTS. Residues 429–449 traverse the membrane as a helical segment; that stretch reads ISFTLPGLLGYKLIGLDSLAI. Topologically, residues 450–463 are cytoplasmic; it reads GKMIPPKDRFYKRC. Residues 464–484 form a helical membrane-spanning segment; it reads SLLLVFYGLSVMFLSLYVTVF. At 485-490 the chain is on the vacuolar side; it reads NRSDEA.

The protein belongs to the amino acid/polyamine transporter 2 family.

Its subcellular location is the vacuole membrane. In terms of biological role, probable amino acid transporter of unknown specificity. In Saccharomyces cerevisiae (strain ATCC 204508 / S288c) (Baker's yeast), this protein is Vacuolar amino acid transporter 7 (AVT7).